We begin with the raw amino-acid sequence, 216 residues long: Gamma-glutamylcyclotransferase 2-1 (216 aa).

5–10 serves as a coordination point for substrate; sequence VFGYGS. The active-site Proton acceptor is the Glu87.

This sequence belongs to the gamma-glutamylcyclotransferase family. It depends on Mn(2+) as a cofactor. Expressed in the central vascular bundle of roots, leaf veins, hydathodes, cauline leaves, shoot apex, sepal veins, flower receptacles and developing seeds.

Its subcellular location is the cytoplasm. The enzyme catalyses an alpha-(gamma-L-glutamyl)-L-amino acid = 5-oxo-L-proline + an L-alpha-amino acid. Catalyzes the formation of 5-oxoproline from gamma-glutamyl dipeptides and plays a significant role in glutathione (GSH) homeostasis. Converts both GSH and gamma-glutamyl-L-alanine to 5-oxoproline in vitro. Plays a role in detoxification of heavy metals and metalloids by recycling glutamate and maintaining GSH homeostasis. The polypeptide is Gamma-glutamylcyclotransferase 2-1 (Arabidopsis thaliana (Mouse-ear cress)).